The primary structure comprises 145 residues: D-aminoacyl-tRNA deacylase (145 aa).

The short motif at 137–138 (GP) is the Gly-cisPro motif, important for rejection of L-amino acids element.

It belongs to the DTD family. In terms of assembly, homodimer.

It localises to the cytoplasm. The enzyme catalyses glycyl-tRNA(Ala) + H2O = tRNA(Ala) + glycine + H(+). It carries out the reaction a D-aminoacyl-tRNA + H2O = a tRNA + a D-alpha-amino acid + H(+). In terms of biological role, an aminoacyl-tRNA editing enzyme that deacylates mischarged D-aminoacyl-tRNAs. Also deacylates mischarged glycyl-tRNA(Ala), protecting cells against glycine mischarging by AlaRS. Acts via tRNA-based rather than protein-based catalysis; rejects L-amino acids rather than detecting D-amino acids in the active site. By recycling D-aminoacyl-tRNA to D-amino acids and free tRNA molecules, this enzyme counteracts the toxicity associated with the formation of D-aminoacyl-tRNA entities in vivo and helps enforce protein L-homochirality. The sequence is that of D-aminoacyl-tRNA deacylase from Shewanella denitrificans (strain OS217 / ATCC BAA-1090 / DSM 15013).